A 371-amino-acid polypeptide reads, in one-letter code: DNA replication and repair protein RecF (371 aa).

30 to 37 (GSNGQGKT) contacts ATP.

Belongs to the RecF family.

The protein resides in the cytoplasm. Its function is as follows. The RecF protein is involved in DNA metabolism; it is required for DNA replication and normal SOS inducibility. RecF binds preferentially to single-stranded, linear DNA. It also seems to bind ATP. The protein is DNA replication and repair protein RecF of Acidothermus cellulolyticus (strain ATCC 43068 / DSM 8971 / 11B).